The primary structure comprises 293 residues: ELMO domain-containing protein 2 (293 aa).

In terms of domain architecture, ELMO spans 126 to 282 (QHEKMLLKLW…KFHERIKGLL (157 aa)).

Its function is as follows. Acts as a GTPase-activating protein (GAP) toward guanine nucleotide exchange factors like ARL2, ARL3, ARF1 and ARF6, but not for GTPases outside the Arf family. This Mus musculus (Mouse) protein is ELMO domain-containing protein 2 (Elmod2).